Reading from the N-terminus, the 198-residue chain is UDP-N-acetylglucosamine transferase subunit ALG13 (198 aa).

This sequence belongs to the glycosyltransferase 28 family. As to quaternary structure, heterodimer with ALG14 to form a functional enzyme.

The protein resides in the endoplasmic reticulum. It catalyses the reaction an N-acetyl-alpha-D-glucosaminyl-diphospho-di-trans,poly-cis-dolichol + UDP-N-acetyl-alpha-D-glucosamine = an N,N'-diacetylchitobiosyl-diphospho-di-trans,poly-cis-dolichol + UDP + H(+). In terms of biological role, involved in protein N-glycosylation. Essential for the second step of the dolichol-linked oligosaccharide pathway. The sequence is that of UDP-N-acetylglucosamine transferase subunit ALG13 (ALG13) from Candida glabrata (strain ATCC 2001 / BCRC 20586 / JCM 3761 / NBRC 0622 / NRRL Y-65 / CBS 138) (Yeast).